The following is a 347-amino-acid chain: High mobility group protein 20A (347 aa).

Polar residues-rich tracts occupy residues Met-1–Leu-10 and Ser-40–Pro-49. Disordered regions lie at residues Met-1 to Phe-113 and Phe-179 to Lys-211. The span at Leu-55–Ser-66 shows a compositional bias: low complexity. Residues Asn-72–Ser-82 show a composition bias toward basic and acidic residues. Residues Lys-83 to Pro-96 are compositionally biased toward basic residues. The HMG box DNA-binding region spans Pro-103–Gln-171. Ser-105 is subject to Phosphoserine. Positions Lys-182–Lys-211 are enriched in basic and acidic residues. A coiled-coil region spans residues Ser-229 to Gln-273.

As to quaternary structure, interacts with DTNB. As to expression, ubiquitous.

Its subcellular location is the nucleus. In terms of biological role, plays a role in neuronal differentiation as chromatin-associated protein. Acts as inhibitor of HMG20B. Overcomes the repressive effects of the neuronal silencer REST and induces the activation of neuronal-specific genes. Involved in the recruitment of the histone methyltransferase KMT2A/MLL1 and consequent increased methylation of histone H3 lysine 4. This chain is High mobility group protein 20A (HMG20A), found in Homo sapiens (Human).